The primary structure comprises 496 residues: Genome polyprotein (496 aa).

The Extracellular segment spans residues S1–S447. Intrachain disulfides connect C3–C30, C60–C116, C60–C121, C74–C105, C92–C116, and C92–C121. Residues D98–G111 are fusion peptide. An N-linked (GlcNAc...) asparagine; by host glycan is attached at N154. 2 disulfide bridges follow: C186/C290 and C307/C338. The helical transmembrane segment at I448 to G468 threads the bilayer. The Cytoplasmic segment spans residues L469 to S479. A helical transmembrane segment spans residues F480–A496.

As to quaternary structure, homodimer; in the endoplasmic reticulum and Golgi. In terms of processing, N-glycosylated.

The protein localises to the virion membrane. It localises to the host endoplasmic reticulum membrane. Its function is as follows. Binds to host cell surface receptor and mediates fusion between viral and cellular membranes. Envelope protein is synthesized in the endoplasmic reticulum in the form of heterodimer with protein prM. They play a role in virion budding in the ER, and the newly formed immature particle is covered with 60 spikes composed of heterodimer between precursor prM and envelope protein E. The virion is transported to the Golgi apparatus where the low pH causes dissociation of PrM-E heterodimers and formation of E homodimers. prM-E cleavage is ineficient, and many virions are only partially matured. These uncleaved prM would play a role in immune evasion. This is Genome polyprotein from Louping ill virus (strain Negishi 3248/49/P10) (Li).